A 147-amino-acid chain; its full sequence is Hemoglobin subunit beta-Y (147 aa).

Positions 3–147 (HFTAEEKAAI…VANALSLKYH (145 aa)) constitute a Globin domain. 2 residues coordinate heme b: histidine 64 and histidine 93.

Belongs to the globin family. In terms of assembly, heterotetramer of two alpha chains and two beta chains.

This is a minor early embryonic beta chain. The protein is Hemoglobin subunit beta-Y (HBBY) of Mesocricetus auratus (Golden hamster).